We begin with the raw amino-acid sequence, 382 residues long: Sulfate adenylyltransferase (382 aa).

This sequence belongs to the sulfate adenylyltransferase family.

It carries out the reaction sulfate + ATP + H(+) = adenosine 5'-phosphosulfate + diphosphate. Its pathway is sulfur metabolism; hydrogen sulfide biosynthesis; sulfite from sulfate: step 1/3. The chain is Sulfate adenylyltransferase from Staphylothermus marinus (strain ATCC 43588 / DSM 3639 / JCM 9404 / F1).